Here is a 759-residue protein sequence, read N- to C-terminus: Cullin-4A (759 aa).

Residue K8 forms a Glycyl lysine isopeptide (Lys-Gly) (interchain with G-Cter in SUMO2) linkage. S10 is modified (phosphoserine). K33 is covalently cross-linked (Glycyl lysine isopeptide (Lys-Gly) (interchain with G-Cter in ubiquitin)). Residues 691 to 751 (DRQYQIDAAI…RDYMERDKDN (61 aa)) enclose the Cullin neddylation domain. A Glycyl lysine isopeptide (Lys-Gly) (interchain with G-Cter in NEDD8) cross-link involves residue K705.

It belongs to the cullin family. Can self-associate. Component of multiple DCX (DDB1-CUL4-X-box) E3 ubiquitin-protein ligase complexes that seem to consist of DDB1, CUL4A or CUL4B, RBX1 and a variable substrate recognition component which seems to belong to a protein family described as DCAF (Ddb1- and Cul4-associated factor) or CDW (CUL4-DDB1-associated WD40-repeat) proteins. Component of the CSA complex (DCX(ERCC8) complex) containing ERCC8, RBX1, DDB1 and CUL4A; the CSA complex interacts with RNA polymerase II; upon UV irradiation it interacts with the COP9 signalosome and preferentially with the hyperphosphorylated form of RNA polymerase II. Component of the DCX(DET1-COP1) complex with the substrate recognition component DET1 and COP1. Component of the DCX(DDB2) complex with the substrate recognition component DDB2. Component of the DCX(DTL) complex with the putative substrate recognition component DTL. Component of DCX complexes part of the DesCEND (destruction via C-end degrons) pathway, which contain either TRPC4AP or DCAF12 as substrate-recognition component. Component of the DCX(AMBRA1) complex with the substrate recognition component AMBRA1. Interacts with DDB1, RBX1, RNF7, CDT1, TIP120A/CAND1, SKP2, CDKN1B, MDM2, TP53 and HOXA9. Interacts with DDB2; the interactions with DDB2 and CAND1 are mutually exclusive. Interacts with DCAF1, DTL, DDA1, DCAF6, DCAF4, DCAF16, DCAF17, DET1, WDTC1, DCAF5, DCAF11, WDR24A, COP1, PAFAH1B1, ERCC8, GRWD1, FBXW5, RBBP7, GNB2, WSB1, WSB2, NUP43, PWP1, FBXW8, ATG16L1, KATNB1, RBBP4, RBBP5, LRWD1 and DCAF8. May interact with WDR26, WDR51B, SNRNP40, WDR61, WDR76, WDR5. Interacts (when neddylated) with ARIH1; leading to activate the E3 ligase activity of ARIH1. The DDB1-CUL4A complex interacts with CRY1. Interacts (unneddylated form) with DCUN1D1, DCUN1D2, DCUN1D3, DCUN1D4 and DCUN1D5; these interactions promote the cullin neddylation. As to quaternary structure, (Microbial infection) Interacts with Epstein-Barr virus BPLF1. Post-translationally, neddylated; required for activity of cullin-RING-based E3 ubiquitin-protein ligase complexes. Deneddylated via its interaction with the COP9 signalosome (CSN) complex. In terms of processing, (Microbial infection) Deneddylated by Epstein-Barr virus BPLF1 leading to a S-phase-like environment that is required for efficient replication of the viral genome.

Its pathway is protein modification; protein ubiquitination. In terms of biological role, core component of multiple cullin-RING-based E3 ubiquitin-protein ligase complexes which mediate the ubiquitination of target proteins. As a scaffold protein may contribute to catalysis through positioning of the substrate and the ubiquitin-conjugating enzyme. The E3 ubiquitin-protein ligase activity of the complex is dependent on the neddylation of the cullin subunit and is inhibited by the association of the deneddylated cullin subunit with TIP120A/CAND1. The functional specificity of the E3 ubiquitin-protein ligase complex depends on the variable substrate recognition component. DCX(DET1-COP1) directs ubiquitination of JUN. DCX(DDB2) directs ubiquitination of XPC. DCX(DDB2) ubiquitinates histones H3-H4 and is required for efficient histone deposition during replication-coupled (H3.1) and replication-independent (H3.3) nucleosome assembly, probably by facilitating the transfer of H3 from ASF1A/ASF1B to other chaperones involved in histone deposition. DCX(DTL) plays a role in PCNA-dependent polyubiquitination of CDT1 and MDM2-dependent ubiquitination of p53/TP53 in response to radiation-induced DNA damage and during DNA replication. DCX(DTL) directs autoubiquitination of DTL. In association with DDB1 and SKP2 probably is involved in ubiquitination of CDKN1B/p27kip. Is involved in ubiquitination of HOXA9. The DDB1-CUL4A-DTL E3 ligase complex regulates the circadian clock function by mediating the ubiquitination and degradation of CRY1. The DCX(ERCC8) complex (also named CSA complex) plays a role in transcription-coupled repair (TCR). A number of DCX complexes (containing either TRPC4AP or DCAF12 as substrate-recognition component) are part of the DesCEND (destruction via C-end degrons) pathway, which recognizes a C-degron located at the extreme C terminus of target proteins, leading to their ubiquitination and degradation. The DCX(AMBRA1) complex is a master regulator of the transition from G1 to S cell phase by mediating ubiquitination of phosphorylated cyclin-D (CCND1, CCND2 and CCND3). The DCX(AMBRA1) complex also acts as a regulator of Cul5-RING (CRL5) E3 ubiquitin-protein ligase complexes by mediating ubiquitination and degradation of Elongin-C (ELOC) component of CRL5 complexes. With CUL4B, contributes to ribosome biogenesis. The sequence is that of Cullin-4A from Homo sapiens (Human).